We begin with the raw amino-acid sequence, 432 residues long: Tyrosine--tRNA ligase (432 aa).

Tyr-35 lines the L-tyrosine pocket. The 'HIGH' region signature appears at 40–49; it reads PTAGSLHVGH. The L-tyrosine site is built by Tyr-175 and Gln-179. Residues 239–243 carry the 'KMSKS' region motif; it reads KFGKT. Residue Lys-242 participates in ATP binding. The region spanning 365-422 is the S4 RNA-binding domain; sequence PPLVDLFASTGLVPSKSAARRTIQEGGAYLNNAKVTDIEARVSEADLLHGRYLVLRRG.

Belongs to the class-I aminoacyl-tRNA synthetase family. TyrS type 1 subfamily. Homodimer.

The protein resides in the cytoplasm. It carries out the reaction tRNA(Tyr) + L-tyrosine + ATP = L-tyrosyl-tRNA(Tyr) + AMP + diphosphate + H(+). Functionally, catalyzes the attachment of tyrosine to tRNA(Tyr) in a two-step reaction: tyrosine is first activated by ATP to form Tyr-AMP and then transferred to the acceptor end of tRNA(Tyr). This Thermobifida fusca (strain YX) protein is Tyrosine--tRNA ligase.